The primary structure comprises 823 residues: Ankyrin repeat domain-containing protein 20A1 (823 aa).

5 ANK repeats span residues 66–95 (QHRT…QIDV), 99–128 (ENRT…NPNL), 132–161 (YGNT…HIEA), 165–194 (DNNT…SSHA), and 198–227 (LRRS…DVFA). 2 disordered regions span residues 301–343 (VPEK…EVED) and 355–402 (VQTL…LSEN). Residues 372 to 384 (QERHERSEKKQPQ) show a composition bias toward basic and acidic residues. 3 coiled-coil regions span residues 431–480 (KKLK…KQLE), 565–724 (EMIT…NNST), and 776–805 (LVLE…EKTE).

This is Ankyrin repeat domain-containing protein 20A1 (ANKRD20A1) from Homo sapiens (Human).